Reading from the N-terminus, the 653-residue chain is MKVSQILPLAGAISVASGFWIPDFSNKQNSNSYPGQYKGKGGYQDDCGDDYKKGYKSKTYSKVKPITSTDCTTPIQPTGTTTGYTKDVVESTSYTTDTAYTTTVITVTKCDGGSCSHTAVTTGVTIITVTTNDVITEYTTYCPLTSTPATESTPATESTPATESTPATESTPATESTPATESTPCTTSTETTPATESTPATESTPATESTPATESTPATESTPATESTPATESTPATESTPCTTSTETTPATESTASTETASSTPVESTVIVPSTTVITVSSCYEDKCSVSSVTTGVVTISSEETIYTTYCPITSSITIPVPNTSTPAAPGTPVESQPVIPGTETTPAAPGTPVESQPVIPGTETTPAAPGTPVESQPATTPVAPGTETTPAAPGTPVESQPATTPVAPGTETTPAAPGTPVESQPVIPGTETTPAAPGTPVESQPATTPVAPGTETTPAAPGTPVESQPVIPGTETTPAAPGTPVESQPATTPVAPGTETTPAAPGTPVESQPVIPGTETTPAAPGTPGTEATPVTTQPVSVLSTSQVVTASGEFSTVTAHSTSIVASCPEGGCVPEGQQTETSPSVPTNGPEVEASSSVLSIPVSSVTTSTIASSSETSVPPAQVSTFEGSGSALKKPYYGLAVAALVYFM.

The N-terminal stretch at 1–18 is a signal peptide; that stretch reads MKVSQILPLAGAISVASG. The N-terminal cell-cell adhesion domain stretch occupies residues 19–146; that stretch reads FWIPDFSNKQ…EYTTYCPLTS (128 aa). Positions 144 to 267 are disordered; sequence LTSTPATEST…TETASSTPVE (124 aa). A compositionally biased stretch (low complexity) spans 145 to 267; it reads TSTPATESTP…TETASSTPVE (123 aa). 15 consecutive repeat copies span residues 147–152, 153–158, 159–164, 165–170, 171–176, 177–182, 192–197, 198–203, 204–209, 210–215, 216–221, 222–227, 228–233, 234–248, and 249–254. A 15 X 6 AA tandem repeats, Ser/Thr-rich region spans residues 147-254; it reads TPATESTPAT…STETTPATES (108 aa). N-linked (GlcNAc...) asparagine glycosylation is present at asparagine 323. Disordered regions lie at residues 324 to 540 and 572 to 595; these read TSTP…TTQP and EGGC…GPEV. A run of 10 repeats spans residues 326–345, 346–365, 366–389, 390–413, 414–433, 434–457, 458–477, 478–501, 502–521, and 522–541. A 10 X 20 AA approximate tandem repeats region spans residues 326–541; sequence TPAAPGTPVE…EATPVTTQPV (216 aa). Composition is skewed to low complexity over residues 341–353 and 361–538; these read PGTE…PGTP and PGTE…PVTT. Residues 579 to 590 show a composition bias toward polar residues; it reads GQQTETSPSVPT. The GPI-anchor amidated glycine moiety is linked to residue glycine 632. A propeptide spans 633–653 (removed in mature form); sequence SGSALKKPYYGLAVAALVYFM.

Belongs to the PGA18 family. The GPI-anchor is attached to the protein in the endoplasmic reticulum and serves to target the protein to the cell surface. There, the glucosamine-inositol phospholipid moiety is cleaved off and the GPI-modified mannoprotein is covalently attached via its lipidless GPI glycan remnant to the 1,6-beta-glucan of the outer cell wall layer.

The protein localises to the secreted. Its subcellular location is the cell wall. The protein resides in the membrane. Functionally, cell wall protein which mediates cell-cell and cell-substrate adhesion. Required for biofilm formation and plays a role in virulence. The chain is Cell wall adhesin EAP1 (EAP1) from Candida albicans (strain SC5314 / ATCC MYA-2876) (Yeast).